The primary structure comprises 107 residues: Phosphoribosyl-ATP pyrophosphatase (107 aa).

The protein belongs to the PRA-PH family.

The protein localises to the cytoplasm. It carries out the reaction 1-(5-phospho-beta-D-ribosyl)-ATP + H2O = 1-(5-phospho-beta-D-ribosyl)-5'-AMP + diphosphate + H(+). Its pathway is amino-acid biosynthesis; L-histidine biosynthesis; L-histidine from 5-phospho-alpha-D-ribose 1-diphosphate: step 2/9. This Bacillus mycoides (strain KBAB4) (Bacillus weihenstephanensis) protein is Phosphoribosyl-ATP pyrophosphatase.